A 106-amino-acid chain; its full sequence is Large ribosomal subunit protein bL21 (106 aa).

Belongs to the bacterial ribosomal protein bL21 family. As to quaternary structure, part of the 50S ribosomal subunit. Contacts protein L20.

In terms of biological role, this protein binds to 23S rRNA in the presence of protein L20. In Streptomyces coelicolor (strain ATCC BAA-471 / A3(2) / M145), this protein is Large ribosomal subunit protein bL21.